The primary structure comprises 404 residues: Chorismate synthase (404 aa).

Residues R40 and R46 each coordinate NADP(+). Residues 136–138 (RAS), 257–258 (QA), G301, 316–320 (KPIST), and R342 each bind FMN.

Belongs to the chorismate synthase family. As to quaternary structure, homotetramer. It depends on FMNH2 as a cofactor.

The enzyme catalyses 5-O-(1-carboxyvinyl)-3-phosphoshikimate = chorismate + phosphate. Its pathway is metabolic intermediate biosynthesis; chorismate biosynthesis; chorismate from D-erythrose 4-phosphate and phosphoenolpyruvate: step 7/7. Functionally, catalyzes the anti-1,4-elimination of the C-3 phosphate and the C-6 proR hydrogen from 5-enolpyruvylshikimate-3-phosphate (EPSP) to yield chorismate, which is the branch point compound that serves as the starting substrate for the three terminal pathways of aromatic amino acid biosynthesis. This reaction introduces a second double bond into the aromatic ring system. This chain is Chorismate synthase, found in Mycolicibacterium vanbaalenii (strain DSM 7251 / JCM 13017 / BCRC 16820 / KCTC 9966 / NRRL B-24157 / PYR-1) (Mycobacterium vanbaalenii).